The chain runs to 147 residues: Hemoglobin subunit beta (147 aa).

Val-2 carries the N-acetylvaline modification. The Globin domain occupies 3–147; sequence HLSGEEKSAV…VANALAHKYH (145 aa). Thr-13 carries the post-translational modification Phosphothreonine. Residue Ser-45 is modified to Phosphoserine. Position 60 is an N6-acetyllysine (Lys-60). His-64 lines the heme b pocket. Lys-83 is modified (N6-acetyllysine). Heme b is bound at residue His-93. Cys-94 carries the post-translational modification S-nitrosocysteine. Lys-145 carries the post-translational modification N6-acetyllysine.

It belongs to the globin family. In terms of assembly, heterotetramer of two alpha chains and two beta chains. Red blood cells.

Its function is as follows. Involved in oxygen transport from the lung to the various peripheral tissues. The sequence is that of Hemoglobin subunit beta (HBB) from Lepus europaeus (European hare).